Here is a 592-residue protein sequence, read N- to C-terminus: MLRTHTCGALRKSDVGSPVTLCGWVDSKRDHGGAVFIDLRDRYGLTQVVIGPPEANEALIKQAGHVPNESVILIRGVVADRLEGKTNAKLETGEIEVRSEHFEILSASETPPFTPGQSDLPGEDLRLKYRFLDLRRKEMQQALIRRSEIIKCMRDYFAEHDFIDVETPILGRSTPEGARDYLVPSRVHPSNFYALPQSPQLYKQILMVAGFDRYVQVAKCFRDEDLRADRQPEFTQLDLEMSFVDSEDIIGLIDGLVAKTAKQVLGKDITLPLPRMTYEEAMRRFGSDAPDLRFGLEIVDVTSVAAKTDFRVFRGTADAGNFVRGINVKDSALKFSRRQIDELTAFVQQDFGAKGLAWFRVEDDGTLWSPIAKNFDEEHLAEIKALMGGEPGDLLMFLADTWEVTCKGLSGLRKRLAVELKLYEDGELNCSWVTEFPMFEKDEEAGRYVAMHHPFTAPLEEDLPLLKESPEKCRAQAYDLVINGSEAGGGTIRIHDSKVQSQVFELLGMDEETARDRFGFLLDALRFGAPPHGGIALGVDRWVMLFAGLENIREVIAFPKTQKAADMMTGAPGEVDADQLNELHLRTVSAKT.

Residue Glu176 participates in L-aspartate binding. Residues 200-203 (QLYK) are aspartate. An L-aspartate-binding site is contributed by Arg222. ATP contacts are provided by residues 222-224 (RDE) and Gln231. His452 is an L-aspartate binding site. Glu486 is a binding site for ATP. Arg493 contributes to the L-aspartate binding site. An ATP-binding site is contributed by 538–541 (GVDR).

This sequence belongs to the class-II aminoacyl-tRNA synthetase family. Type 1 subfamily. As to quaternary structure, homodimer.

The protein localises to the cytoplasm. It catalyses the reaction tRNA(Asx) + L-aspartate + ATP = L-aspartyl-tRNA(Asx) + AMP + diphosphate. Its function is as follows. Aspartyl-tRNA synthetase with relaxed tRNA specificity since it is able to aspartylate not only its cognate tRNA(Asp) but also tRNA(Asn). Reaction proceeds in two steps: L-aspartate is first activated by ATP to form Asp-AMP and then transferred to the acceptor end of tRNA(Asp/Asn). In Rhodopirellula baltica (strain DSM 10527 / NCIMB 13988 / SH1), this protein is Aspartate--tRNA(Asp/Asn) ligase.